A 362-amino-acid polypeptide reads, in one-letter code: Sphingolipid delta(4)-desaturase (362 aa).

The span at 1-10 shows a compositional bias: low complexity; sequence MAESTATTTA. A disordered region spans residues 1–20; sequence MAESTATTTAVPPPAEESWN. 3 consecutive transmembrane segments (helical) span residues 60–80, 90–110, and 121–143; these read PLTK…AYLL, FFLT…LAIH, and TLYN…AASF. The Histidine box-1 signature appears at 110–114; the sequence is HELSH. A Histidine box-2 motif is present at residues 147-151; the sequence is HMEHH. 3 helical membrane passes run 169–189, 200–220, and 228–248; these read LILF…LLFY, PFTL…YLVV, and LAYF…AGHF. The Histidine box-3 motif lies at 290-294; it reads HIEHH.

The protein belongs to the fatty acid desaturase type 1 family. DEGS subfamily.

The protein localises to the membrane. It catalyses the reaction an N-acylsphinganine + 2 Fe(II)-[cytochrome b5] + O2 + 2 H(+) = an N-acylsphing-4-enine + 2 Fe(III)-[cytochrome b5] + 2 H2O. It functions in the pathway lipid metabolism; sphingolipid metabolism. In terms of biological role, delta(4)-fatty-acid desaturase which introduces a double bond at the 4-position in the long-chain base (LCB) of ceramides. Required for sphingosine biosynthesis. This chain is Sphingolipid delta(4)-desaturase (dsd1), found in Schizosaccharomyces pombe (strain 972 / ATCC 24843) (Fission yeast).